A 1094-amino-acid polypeptide reads, in one-letter code: MEELKTCPFTNVIPYGLLYDKLKKEKNNDVPENYVIEEFDKLLKNYERPNVYDEIGNATFKNDEDLITFQIDLDYTVENIFKNMIYNESGSNNSILNDIYMPYRILLSKDKNYVSVPIIRIYSLRKDGCSVLINVHNFFPYFYVEKPDDFDNEDLIKLEMLMNENLNLNSQYKIYEKKILKIEIVKTESLMYFKKNGKKDFLKITVLLPKMVPSLKKYFEGIVHVNNKSIGGIVYEANLPFILRYIIDHKITGSSWINCKKGHYYIRNKNKKISNCTFEIDISYEHVEPITLENEYQQIPKLRILSFDIECIKLDGKGFPEAKNDPIIQISSILYFQGEPIDNCTKFIFTLLECASIPGSNVIWFNDEKTLLEAWNEFIIRIDPDFLTGYNIINFDLPYILNRGTALNLKKLKFLGRIKNVASTVKDSSFSSKQFGTHETKEINIFGRIQFDVYDLIKRDYKLKSYTLNYVSFEFLKEQKEDVHYSIMNDLQNESPESRKRIATYCIKDGVLPLRLIDKLLFIYNYVEMARVTGTPFVYLLTRGQQIKVTSQLYRKCKELNYVIPSTYMKVNTNEKYEGATVLEPIKGYYIEPISTLDFASLYPSIMIAHNLCYSTLIKSNHEVSDLQNDDITTIQGKNNLKFVKKNVKKGILPLIVEELIEARKKVKLLIKNEKNNITKMVLNGRQLALKISANSVYGYTGASSGGQLPCLEVAVSITTLGRSMIEKTKERVESFYCKSNGYEHNSTVIYGDTDSVMVKFGTNNIEEAMTLGKDAAERISKEFLSPIKLEFEKVYCPYLLLNKKRYAGLLYTNPNKHDKMDCKGIETVRRDFCILIQQMMETVLNKLLIEKNLNSAIEYTKSKIKELLTNNIDMSLLVVTKSLGKTDYETRLPHVELAKKLKQRDSATAPNVGDRVSYIIVKGVKGQAQYERAEDPLYVLDNNLAIDYNHYLDAIKSPLSRIFEVIMQNSDSLFSGDHTRHKTILTSSQTALSKFLKKSVRCIGCNSSIKKPPLCNHCKENKEFSIYMQKIKDFKNKQNEFFQLWTECQRCQGNLHVDVICMNRDCPIFYRRAKIKKDIANLQEQVTSLRMDW.

4 residues coordinate Zn(2+): C1003, C1006, C1016, and C1019. The CysA-type zinc-finger motif lies at 1003–1019 (CIGCNSSIKKPPLCNHC). Residues C1049, C1052, C1062, and C1067 each contribute to the [4Fe-4S] cluster site. Positions 1049 to 1067 (CQRCQGNLHVDVICMNRDC) match the CysB motif motif.

The protein belongs to the DNA polymerase type-B family. Heterodimer composed of a catalytic subunit POLD and a small regulatory subunit. Requires [4Fe-4S] cluster as cofactor. Mg(2+) is required as a cofactor.

The protein localises to the nucleus. It catalyses the reaction DNA(n) + a 2'-deoxyribonucleoside 5'-triphosphate = DNA(n+1) + diphosphate. With respect to regulation, the small regulatory subunit delta and PCNA1 increase POLD catalytic activity. In terms of biological role, this polymerase possesses two enzymatic activities: DNA synthesis (polymerase) and an exonucleolytic activity that degrades single-stranded DNA in the 3'- to 5'-direction. This is DNA polymerase delta catalytic subunit (POLD) from Plasmodium falciparum (isolate K1 / Thailand).